Consider the following 336-residue polypeptide: Aspartate--ammonia ligase (336 aa).

This sequence belongs to the class-II aminoacyl-tRNA synthetase family. AsnA subfamily.

The protein localises to the cytoplasm. It catalyses the reaction L-aspartate + NH4(+) + ATP = L-asparagine + AMP + diphosphate + H(+). Its pathway is amino-acid biosynthesis; L-asparagine biosynthesis; L-asparagine from L-aspartate (ammonia route): step 1/1. In Limosilactobacillus fermentum (strain NBRC 3956 / LMG 18251) (Lactobacillus fermentum), this protein is Aspartate--ammonia ligase.